Here is a 235-residue protein sequence, read N- to C-terminus: Fibrillarin-like rRNA/tRNA 2'-O-methyltransferase (235 aa).

Residues 91–92 (TT), 110–111 (EF), 137–138 (DA), and 157–160 (DVAQ) contribute to the S-adenosyl-L-methionine site.

This sequence belongs to the methyltransferase superfamily. Fibrillarin family. Interacts with nop5. Component of box C/D small ribonucleoprotein (sRNP) particles that contain rpl7ae, FlpA and nop5, plus a guide RNA.

Its function is as follows. Involved in pre-rRNA and tRNA processing. Utilizes the methyl donor S-adenosyl-L-methionine to catalyze the site-specific 2'-hydroxyl methylation of ribose moieties in rRNA and tRNA. Site specificity is provided by a guide RNA that base pairs with the substrate. Methylation occurs at a characteristic distance from the sequence involved in base pairing with the guide RNA. This chain is Fibrillarin-like rRNA/tRNA 2'-O-methyltransferase, found in Pyrobaculum islandicum (strain DSM 4184 / JCM 9189 / GEO3).